The primary structure comprises 303 residues: Taste receptor type 2 member 13 (303 aa).

Residues 1–7 (MESALPS) are Extracellular-facing. The helical transmembrane segment at 8–28 (IFTLVIIAEFIIGNLSNGFIV) threads the bilayer. Residues 29 to 55 (LINCIDWVSKRELSSVDKLLIILAISR) are Cytoplasmic-facing. The helical transmembrane segment at 56-76 (IGLIWEILVSWFLALHYLAIF) threads the bilayer. Over 77–85 (VSGTGLRIM) the chain is Extracellular. Residues 86–106 (IFSWIVSNHFNLWLATIFSIF) form a helical membrane-spanning segment. Topologically, residues 107–128 (YLLKIASFSSPAFLYLKWRVNK) are cytoplasmic. A helical transmembrane segment spans residues 129–149 (VILMILLGTLVFLFLNLIQIN). Residues 150 to 184 (MHIKDWLDRYERNTTWNFSMSDFETFSVSVKFTMT) lie on the Extracellular side of the membrane. 2 N-linked (GlcNAc...) asparagine glycosylation sites follow: asparagine 162 and asparagine 166. A helical membrane pass occupies residues 185-205 (MFSLTPFTVAFISFLLLIFSL). At 206-232 (QKHLQKMQLNYKGHRDPRTKVHTNALK) the chain is on the cytoplasmic side. The chain crosses the membrane as a helical span at residues 233-253 (IVISFLLFYASFFLCVLISWI). Topologically, residues 254 to 261 (SELYQNTV) are extracellular. A helical membrane pass occupies residues 262-282 (IYMLCETIGVFSPSSHSFLLI). Residues 283–303 (LGNAKLRQAFLLVAAKVWAKR) lie on the Cytoplasmic side of the membrane.

Belongs to the G-protein coupled receptor T2R family. As to expression, expressed in subsets of taste receptor cells of the tongue and palate epithelium and exclusively in gustducin-positive cells.

The protein resides in the membrane. Functionally, receptor that may play a role in the perception of bitterness and is gustducin-linked. May play a role in sensing the chemical composition of the gastrointestinal content. The activity of this receptor may stimulate alpha gustducin, mediate PLC-beta-2 activation and lead to the gating of TRPM5. The protein is Taste receptor type 2 member 13 (TAS2R13) of Homo sapiens (Human).